The primary structure comprises 289 residues: Protease HtpX homolog (289 aa).

Transmembrane regions (helical) follow at residues Leu-8–Gly-28 and Ser-29–Gln-49. His-132 contacts Zn(2+). Glu-133 is an active-site residue. His-136 is a Zn(2+) binding site. 2 helical membrane-spanning segments follow: residues Val-151–Ile-171 and Leu-183–Ile-203. Glu-208 is a binding site for Zn(2+).

This sequence belongs to the peptidase M48B family. It depends on Zn(2+) as a cofactor.

Its subcellular location is the cell inner membrane. The chain is Protease HtpX homolog from Nostoc sp. (strain PCC 7120 / SAG 25.82 / UTEX 2576).